The sequence spans 84 residues: Beta-defensin 119 (84 aa).

An N-terminal signal peptide occupies residues 1–21 (MKFLFLFLAILLATEVPVISG). Intrachain disulfides connect cysteine 28-cysteine 55, cysteine 35-cysteine 49, and cysteine 39-cysteine 56.

This sequence belongs to the beta-defensin family. In terms of tissue distribution, abundant expression in the male reproductive tract only. Expressed abundantly in testis, while expression in epididymis decreased gradually from caput to cauda.

It is found in the secreted. Has antibacterial activity. In Macaca mulatta (Rhesus macaque), this protein is Beta-defensin 119 (DEFB119).